The primary structure comprises 521 residues: Cytochrome P450 monooxygenase sdnF (521 aa).

A helical transmembrane segment spans residues 19–39; that stretch reads YLGLLLSGTVLYTVYKLIIAI. N-linked (GlcNAc...) asparagine glycosylation is found at Asn-178, Asn-186, Asn-191, Asn-309, and Asn-416. Cys-460 provides a ligand contact to heme.

The protein belongs to the cytochrome P450 family. Heme serves as cofactor.

Its subcellular location is the membrane. Its pathway is antibiotic biosynthesis. In terms of biological role, cytochrome P450 monooxygenase; part of the gene cluster that mediates the biosynthesis of sordarin and hypoxysordarin, glycoside antibiotics with a unique tetracyclic diterpene aglycone structure. First, the geranylgeranyl diphosphate synthase sdnC constructs GGDP from farnesyl diphosphate and isopentenyl diphosphate. The diterpene cyclase sdnA then catalyzes the cyclization of GGDP to afford cycloaraneosene. Cycloaraneosene is then hydroxylated four times by the putative cytochrome P450 monooxygenases sdnB, sdnE, sdnF and sdnH to give a hydroxylated cycloaraneosene derivative such as cycloaraneosene-8,9,13,19-tetraol. Although the order of the hydroxylations is unclear, at least C8, C9 and C13 of the cycloaraneosene skeleton are hydroxylated before the sordaricin formation. Dehydration of the 13-hydroxy group of the hydroxylated cycloaraneosene derivative might be catalyzed by an unassigned hypothetical protein such as sdnG and sdnP to construct the cyclopentadiene moiety. The FAD-dependent oxidoreductase sdnN is proposed to catalyze the oxidation at C9 of the hydroxylated cycloaraneosene derivative and also catalyze the Baeyer-Villiger oxidation to give the lactone intermediate. The presumed lactone intermediate would be hydrolyzed to give an acrolein moiety and a carboxylate moiety. Then, [4+2]cycloaddition would occur between the acrolein moiety and the cyclopentadiene moiety to give sordaricin. SdnN might also be involved in the [4+2]cycloaddition after the hypothesized oxidation to accommodate the oxidized product and prompt the [4+2]cycloaddition. GDP-6-deoxy-D-altrose may be biosynthesized from GDP-D-mannose by the putative GDP-mannose-4,6-dehydratase sdnI and the short-chain dehydrogenase sdnK. The glycosyltransferase sdnJ catalyzes the attachment of 6-deoxy-D-altrose onto the 19-hydroxy group of sordaricin to give 4'-O-demethylsordarin. The methyltransferase sdnD would complete the biosynthesis of sordarin. Sordarin can be further modified into hypoxysordarin. The unique acyl chain at the 3'-hydroxy group of hypoxysordarin would be constructed by an iterative type I PKS sdnO and the trans-acting polyketide methyltransferase sdnL. SdnL would be responsible for the introduction of an alpha-methyl group of the polyketide chain. Alternatively, the beta-lactamase-like protein sdnR might be responsible for the cleavage and transfer of the polyketide chain from the PKS sdnO to sordarin. Two putative cytochrome P450 monooxygenases, sdnQ and sdnT, might catalyze the epoxidations of the polyketide chain to complete the biosynthesis of hypoxysordarin. Transcriptional regulators sdnM and sdnS are presumably encoded for the transcriptional regulation of the expression of the sdn gene cluster. The protein is Cytochrome P450 monooxygenase sdnF of Sordaria araneosa (Pleurage araneosa).